Here is a 674-residue protein sequence, read N- to C-terminus: UvrABC system protein B (674 aa).

The Helicase ATP-binding domain occupies 26-183; that stretch reads EGLEDGLAHQ…RRLAELQYTR (158 aa). Residue 39 to 46 participates in ATP binding; it reads GVTGSGKT. Positions 92 to 115 match the Beta-hairpin motif; sequence YYDYYQPEAYVPSSDTFIEKDASV. The region spanning 431 to 597 is the Helicase C-terminal domain; it reads QVDDLLSEIR…GLNKKISDIL (167 aa). Positions 634-669 constitute a UVR domain; that stretch reads QKRIHQLEAQMQQHAQNLEFEEAAQVRDQLHQVREL.

The protein belongs to the UvrB family. As to quaternary structure, forms a heterotetramer with UvrA during the search for lesions. Interacts with UvrC in an incision complex.

The protein resides in the cytoplasm. The UvrABC repair system catalyzes the recognition and processing of DNA lesions. A damage recognition complex composed of 2 UvrA and 2 UvrB subunits scans DNA for abnormalities. Upon binding of the UvrA(2)B(2) complex to a putative damaged site, the DNA wraps around one UvrB monomer. DNA wrap is dependent on ATP binding by UvrB and probably causes local melting of the DNA helix, facilitating insertion of UvrB beta-hairpin between the DNA strands. Then UvrB probes one DNA strand for the presence of a lesion. If a lesion is found the UvrA subunits dissociate and the UvrB-DNA preincision complex is formed. This complex is subsequently bound by UvrC and the second UvrB is released. If no lesion is found, the DNA wraps around the other UvrB subunit that will check the other stand for damage. The chain is UvrABC system protein B from Erwinia tasmaniensis (strain DSM 17950 / CFBP 7177 / CIP 109463 / NCPPB 4357 / Et1/99).